The following is a 524-amino-acid chain: 5'-AMP-activated protein kinase subunit gamma-2 (524 aa).

A disordered region spans residues 1-178 (MPLLDGDLEG…TRPPLASPTH (178 aa)). A phosphoserine mark is found at Ser-21, Ser-27, Ser-29, Ser-46, Ser-94, Ser-99, Ser-117, and Ser-118. The segment covering 112–123 (TSGLSSSPSTPT) has biased composition (low complexity). Phosphothreonine is present on Thr-121. A compositionally biased stretch (basic and acidic residues) spans 135-145 (SYKHEPERLEN). Residues 148–168 (YASSSPPDTGQRFCPSSFQSP) are compositionally biased toward polar residues. At Ser-152 the chain carries Phosphoserine. 3 consecutive CBS domains span residues 230–290 (PTSS…KSPM), 312–370 (TFKP…MSDM), and 385–447 (IGTY…NLDI). Residues Arg-257, 272–277 (MLTITD), Val-317, 338–339 (HR), and Lys-357 contribute to the ADP site. AMP contacts are provided by residues Arg-257, 272–277 (MLTITD), Val-317, His-338, 338–339 (HR), Lys-357, Thr-387, Ala-392, 413–414 (SA), 429–432 (SKFD), Arg-456, His-485, 485–486 (HR), and 501–504 (SLSD). Residues Arg-257, 272–277 (MLTITD), Val-317, 338–339 (HR), Arg-339, and Lys-357 each bind ATP. Residues 325 to 346 (LLDAVYSLIKNKIHRLPVIDPI) carry the AMPK pseudosubstrate motif. ADP-binding positions include 429–432 (SKFD), Arg-456, and 485–486 (HR). ATP is bound by residues 429-432 (SKFD), Arg-456, and 485-486 (HR). The CBS 4 domain maps to 459 to 517 (YFEGVVKCNKLEILETIVDRIVRAEVHRLVVANEADSIVGIISLSDILQALILTPAGAK).

It belongs to the 5'-AMP-activated protein kinase gamma subunit family. In terms of assembly, AMPK is a heterotrimer of an alpha catalytic subunit (PRKAA1 or PRKAA2), a beta (PRKAB1 or PRKAB2) and a gamma non-catalytic subunits (PRKAG1, PRKAG2 or PRKAG3). Interacts with FNIP1 and FNIP2. Post-translationally, phosphorylated by ULK1; leading to negatively regulate AMPK activity and suggesting the existence of a regulatory feedback loop between ULK1 and AMPK. Glycosylated; O-GlcNAcylated by OGT, promoting the AMP-activated protein kinase (AMPK) activity.

In terms of biological role, AMP/ATP-binding subunit of AMP-activated protein kinase (AMPK), an energy sensor protein kinase that plays a key role in regulating cellular energy metabolism. In response to reduction of intracellular ATP levels, AMPK activates energy-producing pathways and inhibits energy-consuming processes: inhibits protein, carbohydrate and lipid biosynthesis, as well as cell growth and proliferation. AMPK acts via direct phosphorylation of metabolic enzymes, and by longer-term effects via phosphorylation of transcription regulators. Also acts as a regulator of cellular polarity by remodeling the actin cytoskeleton; probably by indirectly activating myosin. Gamma non-catalytic subunit mediates binding to AMP, ADP and ATP, leading to activate or inhibit AMPK: AMP-binding results in allosteric activation of alpha catalytic subunit (PRKAA1 or PRKAA2) both by inducing phosphorylation and preventing dephosphorylation of catalytic subunits. ADP also stimulates phosphorylation, without stimulating already phosphorylated catalytic subunit. ATP promotes dephosphorylation of catalytic subunit, rendering the AMPK enzyme inactive. The chain is 5'-AMP-activated protein kinase subunit gamma-2 (PRKAG2) from Pongo abelii (Sumatran orangutan).